Here is a 398-residue protein sequence, read N- to C-terminus: Nuclear egress protein 2 (398 aa).

Residues 1–359 (MEMNKVLHQD…GPSRPQSGPW (359 aa)) are Perinuclear space-facing. 2 disordered regions span residues 202 to 246 (ALTR…PPPP) and 306 to 334 (LEEH…SLER). Positions 215-224 (ASPPPPPPRH) are enriched in pro residues. Residue serine 216 is modified to Phosphoserine. A compositionally biased stretch (low complexity) spans 225-240 (PSCSPTMVAAGGAAAG). Residues 311–323 (SRRRGVSTHHRHP) are compositionally biased toward basic residues. A helical membrane pass occupies residues 360-382 (LPARFATLGPLVLALLLVLALLW). Topologically, residues 383 to 398 (RGHGQSSSPTRSAHRD) are nuclear.

The protein belongs to the herpesviridae NEC2 protein family. In terms of assembly, forms a heterohexameric complex with NEC1. Interacts with host UBA7 and RNF170; this interaction promotes UBA7 proteasomal degradation. Phosphorylated. Phosphorylation by viral kinase UL97 at Ser-216 plays an important role for correct viral nuclear egress complex (NEC) localization.

It localises to the host nucleus inner membrane. In terms of biological role, plays an essential role in virion nuclear egress, the first step of virion release from infected cell. Within the host nucleus, NEC1 interacts with the newly formed capsid through the vertexes and directs it to the inner nuclear membrane by associating with NEC2. Induces the budding of the capsid at the inner nuclear membrane as well as its envelopment into the perinuclear space. There, the NEC1/NEC2 complex promotes the fusion of the enveloped capsid with the outer nuclear membrane and the subsequent release of the viral capsid into the cytoplasm where it will reach the secondary budding sites in the host Golgi or trans-Golgi network. Inhibits host ISGylation and subsequent innate antiviral response by targeting host UBA7 for proteasomal degradation. The protein is Nuclear egress protein 2 of Homo sapiens (Human).